Consider the following 208-residue polypeptide: FMN-dependent NADH:quinone oxidoreductase (208 aa).

Residues 17 to 19, 99 to 102, and 143 to 146 contribute to the FMN site; these read SNS, MWNL, and SRGG.

This sequence belongs to the azoreductase type 1 family. As to quaternary structure, homodimer. The cofactor is FMN.

It carries out the reaction 2 a quinone + NADH + H(+) = 2 a 1,4-benzosemiquinone + NAD(+). The enzyme catalyses N,N-dimethyl-1,4-phenylenediamine + anthranilate + 2 NAD(+) = 2-(4-dimethylaminophenyl)diazenylbenzoate + 2 NADH + 2 H(+). In terms of biological role, quinone reductase that provides resistance to thiol-specific stress caused by electrophilic quinones. Functionally, also exhibits azoreductase activity. Catalyzes the reductive cleavage of the azo bond in aromatic azo compounds to the corresponding amines. The chain is FMN-dependent NADH:quinone oxidoreductase from Staphylococcus aureus (strain MRSA252).